A 681-amino-acid chain; its full sequence is Sodium-dependent phosphate transporter 1 (681 aa).

The next 6 helical transmembrane spans lie at 25–45 (NLWM…SVGA), 66–86 (ACIL…AKVS), 106–126 (LMAG…VASF), 162–182 (IVMS…ILFF), 201–221 (ALPI…MYTG), and 234–254 (GTIL…WFFV). Residues 266-295 (VKSSPSESPLMEKKSNLKEDHEETKMAPGD) are disordered. A phosphoserine mark is found at serine 269 and serine 273. Residues 275 to 295 (LMEKKSNLKEDHEETKMAPGD) are compositionally biased toward basic and acidic residues. A helical membrane pass occupies residues 514 to 534 (VSLLFQFLQILTACFGSFAHG). The a stretch occupies residues 553 to 560 (KQEASTKA). A run of 3 helical transmembrane segments spans residues 561-581 (ATPI…LWVW), 602-622 (FSIE…GLPI), and 652-672 (IFMA…AIMA).

It belongs to the inorganic phosphate transporter (PiT) (TC 2.A.20) family. As to expression, ubiquitously expressed.

It localises to the cell membrane. It catalyses the reaction 2 Na(+)(out) + phosphate(out) = 2 Na(+)(in) + phosphate(in). In terms of biological role, sodium-phosphate symporter which preferentially transports the monovalent form of phosphate with a stoichiometry of two sodium ions per phosphate ion. May play a role in extracellular matrix and cartilage calcification as well as in vascular calcification. Essential for cell proliferation but this function is independent of its phosphate transporter activity. (Microbial infection) May function as a retroviral receptor but do not confer infection susceptibility to Gibbon Ape Leukemia Virus (GaLV), Simian sarcoma-associated virus (SSAV) and Feline leukemia virus subgroup B (FeLV-B). This Mus musculus (Mouse) protein is Sodium-dependent phosphate transporter 1 (Slc20a1).